The primary structure comprises 118 residues: NADPH-dependent 7-cyano-7-deazaguanine reductase (118 aa).

Cys-34 serves as the catalytic Thioimide intermediate. The active-site Proton donor is the Asp-41. Substrate-binding positions include 56 to 58 (VEL) and 75 to 76 (HE).

The protein belongs to the GTP cyclohydrolase I family. QueF type 1 subfamily.

The protein localises to the cytoplasm. The catalysed reaction is 7-aminomethyl-7-carbaguanine + 2 NADP(+) = 7-cyano-7-deazaguanine + 2 NADPH + 3 H(+). The protein operates within tRNA modification; tRNA-queuosine biosynthesis. Functionally, catalyzes the NADPH-dependent reduction of 7-cyano-7-deazaguanine (preQ0) to 7-aminomethyl-7-deazaguanine (preQ1). In Halorhodospira halophila (strain DSM 244 / SL1) (Ectothiorhodospira halophila (strain DSM 244 / SL1)), this protein is NADPH-dependent 7-cyano-7-deazaguanine reductase.